An 89-amino-acid polypeptide reads, in one-letter code: Arminin 7519 (89 aa).

The signal sequence occupies residues 1-18 (MRSTFAVLFLALIALTYS). A propeptide spanning residues 19-59 (KNYQDVKEEIKNEVENEILRDLGEDDDELDDNAQEAVNDAR) is cleaved from the precursor. Ala-86 is subject to Alanine amide.

This sequence belongs to the arminin family. In terms of tissue distribution, expressed in entodermal epithelium along the body column.

It is found in the secreted. It localises to the target cell membrane. Its function is as follows. Antimicrobial peptide with a broad-spectrum antimicrobial activity. Keeps its antibacterial activity under a wide range of salt concentrations that mimic physiological conditions of human blood, which is surprising, since Hydra is an obligate freshwater animal with nearly no salt tolerance. Does not affect red blood cells. In Hydra vulgaris (Hydra), this protein is Arminin 7519.